The sequence spans 465 residues: ATP synthase subunit beta (465 aa).

ATP is bound at residue 152-159; that stretch reads GGAGVGKT.

Belongs to the ATPase alpha/beta chains family. In terms of assembly, F-type ATPases have 2 components, CF(1) - the catalytic core - and CF(0) - the membrane proton channel. CF(1) has five subunits: alpha(3), beta(3), gamma(1), delta(1), epsilon(1). CF(0) has three main subunits: a(1), b(2) and c(9-12). The alpha and beta chains form an alternating ring which encloses part of the gamma chain. CF(1) is attached to CF(0) by a central stalk formed by the gamma and epsilon chains, while a peripheral stalk is formed by the delta and b chains.

It localises to the cell inner membrane. It catalyses the reaction ATP + H2O + 4 H(+)(in) = ADP + phosphate + 5 H(+)(out). Produces ATP from ADP in the presence of a proton gradient across the membrane. The catalytic sites are hosted primarily by the beta subunits. This chain is ATP synthase subunit beta, found in Campylobacter jejuni subsp. jejuni serotype O:6 (strain 81116 / NCTC 11828).